The chain runs to 159 residues: 6,7-dimethyl-8-ribityllumazine synthase (159 aa).

5-amino-6-(D-ribitylamino)uracil-binding positions include W26, 57–59 (ALE), and 79–81 (CVI). A (2S)-2-hydroxy-3-oxobutyl phosphate-binding site is contributed by 84-85 (GT). Catalysis depends on H87, which acts as the Proton donor. N112 contributes to the 5-amino-6-(D-ribitylamino)uracil binding site. R126 contacts (2S)-2-hydroxy-3-oxobutyl phosphate.

Belongs to the DMRL synthase family.

The enzyme catalyses (2S)-2-hydroxy-3-oxobutyl phosphate + 5-amino-6-(D-ribitylamino)uracil = 6,7-dimethyl-8-(1-D-ribityl)lumazine + phosphate + 2 H2O + H(+). It functions in the pathway cofactor biosynthesis; riboflavin biosynthesis; riboflavin from 2-hydroxy-3-oxobutyl phosphate and 5-amino-6-(D-ribitylamino)uracil: step 1/2. In terms of biological role, catalyzes the formation of 6,7-dimethyl-8-ribityllumazine by condensation of 5-amino-6-(D-ribitylamino)uracil with 3,4-dihydroxy-2-butanone 4-phosphate. This is the penultimate step in the biosynthesis of riboflavin. The chain is 6,7-dimethyl-8-ribityllumazine synthase from Corynebacterium efficiens (strain DSM 44549 / YS-314 / AJ 12310 / JCM 11189 / NBRC 100395).